A 74-amino-acid polypeptide reads, in one-letter code: Bacteriocin hiracin-JM79 (74 aa).

A signal peptide spans 1 to 30 (MKKKVLKHCVILGILGTCLAGIGTGIKVDA).

It localises to the secreted. Functionally, bacteriocin with antibacterial activity against the Gram-positive Listeria, Enterococcus, Propionibacterium, Staphylococcus and some strains of Clostridium, Lactobacillus and Pediococcus. Lacks antibacterial activity against Gram-negative bacteria. The protein is Bacteriocin hiracin-JM79 of Enterococcus hirae.